The chain runs to 1889 residues: E3 ubiquitin-protein ligase UBR3 (1889 aa).

Residues 1–27 (MAAAAAAAAVGDPQPPQPEAPAQGLAL) form a disordered region. The segment at 118–189 (ALCGLVWTAN…ESGFCRRHQI (72 aa)) adopts a UBR-type zinc-finger fold. Residues 338 to 362 (LGQIDSSDEEDQDGSQGLGKRKRVK) form a disordered region. Phosphoserine occurs at positions 343 and 344. 2 helical membrane passes run 761 to 781 (MLEG…HLGM) and 919 to 939 (LLHC…ILMD). Positions 1167-1199 (KKITAAEKKTLDKEERRQKARERQQKLLAEFAS) form a coiled coil. S1199 carries the phosphoserine modification. The RING-type; degenerate zinc finger occupies 1306–1364 (DSSCLLAVSIGWEGGVYVQTCGHTLHIDCHKSYMESLRNDQVLQGFSVDKGEFTCPLCR). Residues 1807 to 1827 (QNCGAGTGIFLLINASVIIII) traverse the membrane as a helical segment.

Belongs to the E3 ubiquitin-protein ligase UBR1-like family. In terms of assembly, interacts with UBE2A and UBE2B. As to expression, expressed in numerous cells of the smell, touch, vision, hearing and taste senses. Expressed in cells of the olfactory pathway, including the olfactory cell layer of the main olfactory epithelium (MOE), a mitral neuron cell layer of the olfactory bulb (OB), and a pyramidal cell layer of the piriform cortex of the olfactory cortex (OC). Expressed in the vomeronasal sensory epithelium of the vomeronasal organ (VNO) and the mitral cells of the accessory olfactory bulb. Expressed in tactile tissues, including the dorsal root ganglion, trigeminal ganglion and follicle-sinus complexes. Expressed in cells between hair follicle and sinus and also in the region of the rete ridge collar. Expressed in taste buds of the fungiform, circumvallate, and foliate papillae. Expressed in the spiral ganglion, the organ of Corti of the cochlea in the inner ear, in the sensory epithelium of macula and vestibular ganglion of the balancing system (at protein level). Expressed in the liver and skeletal muscle.

It localises to the membrane. The catalysed reaction is S-ubiquitinyl-[E2 ubiquitin-conjugating enzyme]-L-cysteine + [acceptor protein]-L-lysine = [E2 ubiquitin-conjugating enzyme]-L-cysteine + N(6)-ubiquitinyl-[acceptor protein]-L-lysine.. It participates in protein modification; protein ubiquitination. Functionally, E3 ubiquitin-protein ligase which is a component of the N-end rule pathway. Does not bind to proteins bearing specific N-terminal residues that are destabilizing according to the N-end rule, leading to their ubiquitination and subsequent degradation. May play a role in Shh signaling by mediating the ubiquitination of Kif7. May be important for MYH9 function in certain tissues, possibly by regulating the ubiquitination of MYH9 and consequently affecting its interaction with MYO7A. The polypeptide is E3 ubiquitin-protein ligase UBR3 (Ubr3) (Mus musculus (Mouse)).